The following is a 423-amino-acid chain: COP9 signalosome complex subunit 3 (423 aa).

Positions 197–365 (NFERALYFYE…GMVCFHDNPE (169 aa)) constitute a PCI domain. The disordered stretch occupies residues 402–423 (QFVQKSMGSQEDDSGTKPSSYS).

This sequence belongs to the CSN3 family. In terms of assembly, component of the CSN complex, probably composed of COPS1, COPS2, COPS3, COPS4, COPS5, COPS6, COPS7, COPS8 and COPS9.

The protein localises to the cytoplasm. Its subcellular location is the nucleus. Its function is as follows. Component of the COP9 signalosome complex (CSN), a complex involved in various cellular and developmental processes. The CSN complex is an essential regulator of the ubiquitin (Ubl) conjugation pathway by mediating the deneddylation of the cullin subunits of E3 ligase complexes, leading to modify the Ubl ligase activity. The polypeptide is COP9 signalosome complex subunit 3 (COPS3) (Gallus gallus (Chicken)).